A 152-amino-acid chain; its full sequence is Small ribosomal subunit protein uS9 (152 aa).

Belongs to the universal ribosomal protein uS9 family.

In Mycobacterium ulcerans (strain Agy99), this protein is Small ribosomal subunit protein uS9.